Here is a 307-residue protein sequence, read N- to C-terminus: Nicotinamide/nicotinic acid mononucleotide adenylyltransferase 2 (307 aa).

Residues serine 16 and phenylalanine 17 each coordinate NAD(+). Residue histidine 24 coordinates ATP. NAD(+) contacts are provided by tryptophan 92 and threonine 95. 2 S-palmitoyl cysteine lipidation sites follow: cysteine 164 and cysteine 165. Positions 200, 202, 212, 213, and 232 each coordinate NAD(+). 271-274 (TKSR) serves as a coordination point for ATP.

This sequence belongs to the eukaryotic NMN adenylyltransferase family. Monomer. Mg(2+) serves as cofactor. Post-translationally, degraded in response to injured neurite. Degradation is caused by polyubiquitination by MYCBP2 after recognition by FBXO45. In terms of processing, palmitoylated; palmitoylation is required for membrane association. In terms of tissue distribution, expressed predominantly in the brain and nervous system.

The protein resides in the golgi apparatus membrane. The protein localises to the cytoplasmic vesicle membrane. It is found in the cytoplasm. Its subcellular location is the cell projection. It localises to the axon. The catalysed reaction is beta-nicotinamide D-ribonucleotide + ATP + H(+) = diphosphate + NAD(+). It carries out the reaction nicotinate beta-D-ribonucleotide + ATP + H(+) = deamido-NAD(+) + diphosphate. It functions in the pathway cofactor biosynthesis; NAD(+) biosynthesis; NAD(+) from nicotinamide D-ribonucleotide: step 1/1. The protein operates within cofactor biosynthesis; NAD(+) biosynthesis; deamido-NAD(+) from nicotinate D-ribonucleotide: step 1/1. Inhibited by P1-(adenosine-5')-P3-(nicotinamide-riboside-5')-triphosphate (Np3AD) and P1-(adenosine-5')-P4-(nicotinamide-riboside-5')-tetraphosphate (Np4AD). Functionally, nicotinamide/nicotinate-nucleotide adenylyltransferase that acts as an axon maintenance factor. Axon survival factor required for the maintenance of healthy axons: acts by delaying Wallerian axon degeneration, an evolutionarily conserved process that drives the loss of damaged axons. Catalyzes the formation of NAD(+) from nicotinamide mononucleotide (NMN) and ATP. Can also use the deamidated form; nicotinic acid mononucleotide (NaMN) as substrate but with a lower efficiency. Cannot use triazofurin monophosphate (TrMP) as substrate. Also catalyzes the reverse reaction, i.e. the pyrophosphorolytic cleavage of NAD(+). For the pyrophosphorolytic activity prefers NAD(+), NADH and NaAD as substrates and degrades nicotinic acid adenine dinucleotide phosphate (NHD) less effectively. Fails to cleave phosphorylated dinucleotides NADP(+), NADPH and NaADP(+). Also acts as an activator of ADP-ribosylation by supporting the catalytic activity of PARP16 and promoting mono-ADP-ribosylation of ribosomes by PARP16. May be involved in the maintenance of axonal integrity. The sequence is that of Nicotinamide/nicotinic acid mononucleotide adenylyltransferase 2 from Mus musculus (Mouse).